Consider the following 108-residue polypeptide: DNA-binding protein HBbu (108 aa).

This sequence belongs to the bacterial histone-like protein family.

In terms of biological role, histone-like DNA-binding protein which is capable of wrapping DNA to stabilize it, and thus to prevent its denaturation under extreme environmental conditions. This is DNA-binding protein HBbu (hbb) from Borreliella japonica (Borrelia japonica).